A 374-amino-acid polypeptide reads, in one-letter code: Large ribosomal subunit protein bL27m (374 aa).

A mitochondrion-targeting transit peptide spans 1–41 (MLRLSGVKSAVRARAAAGAAFSVSLSGPQAVSLLALPLVRH).

The protein belongs to the bacterial ribosomal protein bL27 family.

Its subcellular location is the mitochondrion. In terms of biological role, component of the large subunit of mitochondrial ribosome. In Yarrowia lipolytica (strain CLIB 122 / E 150) (Yeast), this protein is Large ribosomal subunit protein bL27m (MRPL2).